The sequence spans 169 residues: General odorant-binding protein 57a (169 aa).

The signal sequence occupies residues 1–20; it reads MFNTRLAIFLLLIVVSLSQA. Cystine bridges form between Cys-39–Cys-77, Cys-73–Cys-120, and Cys-111–Cys-129.

It belongs to the PBP/GOBP family.

Functionally, present in the aqueous fluid surrounding olfactory sensory dendrites and are thought to aid in the capture and transport of hydrophobic odorants into and through this fluid. In Drosophila melanogaster (Fruit fly), this protein is General odorant-binding protein 57a.